A 354-amino-acid polypeptide reads, in one-letter code: UPF0425 pyridoxal phosphate-dependent protein MMP0002 (354 aa).

Residue Lys210 is modified to N6-(pyridoxal phosphate)lysine.

The protein belongs to the UPF0425 family. Requires pyridoxal 5'-phosphate as cofactor.

In Methanococcus maripaludis (strain DSM 14266 / JCM 13030 / NBRC 101832 / S2 / LL), this protein is UPF0425 pyridoxal phosphate-dependent protein MMP0002.